A 974-amino-acid polypeptide reads, in one-letter code: Alpha-1,4 glucan phosphorylase L-2 isozyme, chloroplastic/amyloplastic (974 aa).

The transit peptide at 1-81 directs the protein to the chloroplast; sequence MATFAVSGLN…LDVFQPDSTS (81 aa). The segment at 509-551 is disordered; the sequence is ADVEKAADEEQEEEGKDDSKDEETEAVKAETTNEEEETEVKKV. The segment covering 517 to 532 has biased composition (acidic residues); the sequence is EEQEEEGKDDSKDEET. K820 is modified (N6-(pyridoxal phosphate)lysine).

It belongs to the glycogen phosphorylase family. Requires pyridoxal 5'-phosphate as cofactor. As to expression, leaves.

The protein localises to the plastid. It localises to the chloroplast. It is found in the amyloplast. It carries out the reaction [(1-&gt;4)-alpha-D-glucosyl](n) + phosphate = [(1-&gt;4)-alpha-D-glucosyl](n-1) + alpha-D-glucose 1-phosphate. Its function is as follows. Phosphorylase is an important allosteric enzyme in carbohydrate metabolism. Enzymes from different sources differ in their regulatory mechanisms and in their natural substrates. However, all known phosphorylases share catalytic and structural properties. In Solanum tuberosum (Potato), this protein is Alpha-1,4 glucan phosphorylase L-2 isozyme, chloroplastic/amyloplastic (STP-1).